The sequence spans 160 residues: SsrA-binding protein (160 aa).

The protein belongs to the SmpB family.

The protein localises to the cytoplasm. Required for rescue of stalled ribosomes mediated by trans-translation. Binds to transfer-messenger RNA (tmRNA), required for stable association of tmRNA with ribosomes. tmRNA and SmpB together mimic tRNA shape, replacing the anticodon stem-loop with SmpB. tmRNA is encoded by the ssrA gene; the 2 termini fold to resemble tRNA(Ala) and it encodes a 'tag peptide', a short internal open reading frame. During trans-translation Ala-aminoacylated tmRNA acts like a tRNA, entering the A-site of stalled ribosomes, displacing the stalled mRNA. The ribosome then switches to translate the ORF on the tmRNA; the nascent peptide is terminated with the 'tag peptide' encoded by the tmRNA and targeted for degradation. The ribosome is freed to recommence translation, which seems to be the essential function of trans-translation. The protein is SsrA-binding protein of Dinoroseobacter shibae (strain DSM 16493 / NCIMB 14021 / DFL 12).